We begin with the raw amino-acid sequence, 215 residues long: Protein-L-isoaspartate O-methyltransferase (215 aa).

The active site involves S62.

It belongs to the methyltransferase superfamily. L-isoaspartyl/D-aspartyl protein methyltransferase family.

The protein resides in the cytoplasm. It catalyses the reaction [protein]-L-isoaspartate + S-adenosyl-L-methionine = [protein]-L-isoaspartate alpha-methyl ester + S-adenosyl-L-homocysteine. Catalyzes the methyl esterification of L-isoaspartyl residues in peptides and proteins that result from spontaneous decomposition of normal L-aspartyl and L-asparaginyl residues. It plays a role in the repair and/or degradation of damaged proteins. This is Protein-L-isoaspartate O-methyltransferase from Bradyrhizobium sp. (strain ORS 278).